The chain runs to 160 residues: Large ribosomal subunit protein eL21 (160 aa).

Basic and acidic residues-rich tracts occupy residues 112–123 (NDQKKKEAKEKG) and 136–145 (REAHFVRTNG). Positions 112-145 (NDQKKKEAKEKGTWVQLKRQPAPPREAHFVRTNG) are disordered.

Belongs to the eukaryotic ribosomal protein eL21 family. Component of the large ribosomal subunit.

The protein localises to the cytoplasm. The protein resides in the cytosol. It is found in the endoplasmic reticulum. Its function is as follows. Component of the large ribosomal subunit. The ribosome is a large ribonucleoprotein complex responsible for the synthesis of proteins in the cell. The polypeptide is Large ribosomal subunit protein eL21 (RPL21) (Capra hircus (Goat)).